A 37-amino-acid chain; its full sequence is Large ribosomal subunit protein bL36 (37 aa).

This sequence belongs to the bacterial ribosomal protein bL36 family.

This is Large ribosomal subunit protein bL36 from Nocardioides sp. (strain ATCC BAA-499 / JS614).